The sequence spans 152 residues: Non-specific lipid transfer protein GPI-anchored 8 (152 aa).

The first 23 residues, 1 to 23 (MNITRILGVVTTVVILYSVQVTA), serve as a signal peptide directing secretion. Disulfide bonds link cysteine 42–cysteine 56, cysteine 57–cysteine 98, and cysteine 70–cysteine 107. N-linked (GlcNAc...) asparagine glycosylation occurs at asparagine 108. Serine 124 is lipidated: GPI-anchor amidated serine. Positions 125 to 152 (GNSFSTKKNTALAITFFGFSFVFLGMII) are cleaved as a propeptide — removed in mature form.

Belongs to the plant LTP family.

Its subcellular location is the cell membrane. In terms of biological role, probable lipid transfer protein. This chain is Non-specific lipid transfer protein GPI-anchored 8, found in Arabidopsis thaliana (Mouse-ear cress).